The primary structure comprises 350 residues: Beta-hexosaminidase (350 aa).

Substrate is bound by residues Asp-62, Arg-70, Arg-133, and 163–164; that span reads KH. His-176 serves as the catalytic Proton donor/acceptor. Catalysis depends on Asp-248, which acts as the Nucleophile.

It belongs to the glycosyl hydrolase 3 family. NagZ subfamily.

It localises to the cytoplasm. The enzyme catalyses Hydrolysis of terminal non-reducing N-acetyl-D-hexosamine residues in N-acetyl-beta-D-hexosaminides.. Its pathway is cell wall biogenesis; peptidoglycan recycling. Functionally, plays a role in peptidoglycan recycling by cleaving the terminal beta-1,4-linked N-acetylglucosamine (GlcNAc) from peptide-linked peptidoglycan fragments, giving rise to free GlcNAc, anhydro-N-acetylmuramic acid and anhydro-N-acetylmuramic acid-linked peptides. In Haemophilus influenzae (strain PittEE), this protein is Beta-hexosaminidase.